The sequence spans 142 residues: Ribosomal RNA large subunit methyltransferase H (142 aa).

Gly89 provides a ligand contact to S-adenosyl-L-methionine.

The protein belongs to the RNA methyltransferase RlmH family. As to quaternary structure, homodimer.

The protein resides in the cytoplasm. It carries out the reaction pseudouridine(1915) in 23S rRNA + S-adenosyl-L-methionine = N(3)-methylpseudouridine(1915) in 23S rRNA + S-adenosyl-L-homocysteine + H(+). In terms of biological role, specifically methylates the pseudouridine at position 1915 (m3Psi1915) in 23S rRNA. The sequence is that of Ribosomal RNA large subunit methyltransferase H from Zymomonas mobilis subsp. mobilis (strain ATCC 31821 / ZM4 / CP4).